The chain runs to 102 residues: Small ribosomal subunit protein uS10 (102 aa).

The protein belongs to the universal ribosomal protein uS10 family. Part of the 30S ribosomal subunit.

In terms of biological role, involved in the binding of tRNA to the ribosomes. The polypeptide is Small ribosomal subunit protein uS10 (Thermoanaerobacter pseudethanolicus (strain ATCC 33223 / 39E) (Clostridium thermohydrosulfuricum)).